A 77-amino-acid chain; its full sequence is U10-lycotoxin-Ls1b (77 aa).

The first 20 residues, 1 to 20 (MKLIIFTGLVLFAIVSLIEA), serve as a signal peptide directing secretion. Positions 21-26 (EEESGR) are excised as a propeptide.

Belongs to the neurotoxin 19 (CSTX) family. 09 (U10-Lctx) subfamily. In terms of processing, contains 4 disulfide bonds. Expressed by the venom gland.

Its subcellular location is the secreted. The sequence is that of U10-lycotoxin-Ls1b from Lycosa singoriensis (Wolf spider).